The primary structure comprises 336 residues: Phosphate acyltransferase (336 aa).

This sequence belongs to the PlsX family. Homodimer. Probably interacts with PlsY.

Its subcellular location is the cytoplasm. It catalyses the reaction a fatty acyl-[ACP] + phosphate = an acyl phosphate + holo-[ACP]. The protein operates within lipid metabolism; phospholipid metabolism. Catalyzes the reversible formation of acyl-phosphate (acyl-PO(4)) from acyl-[acyl-carrier-protein] (acyl-ACP). This enzyme utilizes acyl-ACP as fatty acyl donor, but not acyl-CoA. This Pseudomonas aeruginosa (strain UCBPP-PA14) protein is Phosphate acyltransferase.